The following is a 224-amino-acid chain: 7-cyano-7-deazaguanine synthase (224 aa).

An ATP-binding site is contributed by 9–19 (ISGGMDSTLCA). Residues cysteine 190, cysteine 198, cysteine 201, and cysteine 204 each contribute to the Zn(2+) site.

Belongs to the QueC family. The cofactor is Zn(2+).

It catalyses the reaction 7-carboxy-7-deazaguanine + NH4(+) + ATP = 7-cyano-7-deazaguanine + ADP + phosphate + H2O + H(+). Its pathway is purine metabolism; 7-cyano-7-deazaguanine biosynthesis. Functionally, catalyzes the ATP-dependent conversion of 7-carboxy-7-deazaguanine (CDG) to 7-cyano-7-deazaguanine (preQ(0)). The chain is 7-cyano-7-deazaguanine synthase from Campylobacter jejuni (strain RM1221).